Reading from the N-terminus, the 273-residue chain is Programmed cell death 1 ligand 2 (273 aa).

The first 19 residues, 1–19, serve as a signal peptide directing secretion; sequence MIFLLLMLSLELQLHQIAA. Topologically, residues 20 to 220 are extracellular; it reads LFTVTVPKEL…SQMEPRTHPT (201 aa). Residues 21–118 enclose the Ig-like V-type domain; that stretch reads FTVTVPKELY…AWDYKYLTLK (98 aa). Residues asparagine 37, asparagine 64, asparagine 157, asparagine 163, and asparagine 189 are each glycosylated (N-linked (GlcNAc...) asparagine). 2 cysteine pairs are disulfide-bonded: cysteine 42/cysteine 102 and cysteine 143/cysteine 192. The Ig-like C2-type domain maps to 122-203; it reads SYRKINTHIL…FWNTHVRELT (82 aa). The chain crosses the membrane as a helical span at residues 221–241; sequence WLLHIFIPFCIIAFIFIATVI. Residues 242 to 273 lie on the Cytoplasmic side of the membrane; it reads ALRKQLCQKLYSSKDTTKRPVTTTKREVNSAI.

Belongs to the immunoglobulin superfamily. BTN/MOG family. Interacts with PDCD1. In terms of tissue distribution, highly expressed in heart, placenta, pancreas, lung and liver and weakly expressed in spleen, lymph nodes and thymus.

It is found in the secreted. The protein localises to the endomembrane system. The protein resides in the cell membrane. Involved in the costimulatory signal, essential for T-cell proliferation and IFNG production in a PDCD1-independent manner. Interaction with PDCD1 inhibits T-cell proliferation by blocking cell cycle progression and cytokine production. The polypeptide is Programmed cell death 1 ligand 2 (PDCD1LG2) (Homo sapiens (Human)).